The sequence spans 828 residues: Periplasmic nitrate reductase (828 aa).

A signal peptide (tat-type signal) is located at residues 1-31; it reads MKLSRRSFMKANAVAAAAAAAGLSVPGVARA. A 4Fe-4S Mo/W bis-MGD-type domain is found at 39–95; the sequence is IKWDKAPCRFCGTGCGVLVGTQQGRVVACQGDPDAPVNRGLNCIKGYFLPKIMYGKD. Positions 46, 49, 53, and 81 each coordinate [4Fe-4S] cluster. Residues K83, Q150, N175, C179, 212–219, 243–247, 262–264, M372, Q376, N482, 508–509, K531, D558, and 718–727 contribute to the Mo-bis(molybdopterin guanine dinucleotide) site; these read WGSNMAEM, STFQH, QSD, SD, and TGRVLEHWHT. Residue F794 coordinates substrate. Mo-bis(molybdopterin guanine dinucleotide) is bound by residues N802 and K819.

The protein belongs to the prokaryotic molybdopterin-containing oxidoreductase family. NasA/NapA/NarB subfamily. Component of the periplasmic nitrate reductase NapAB complex composed of NapA and NapB. The cofactor is [4Fe-4S] cluster. Mo-bis(molybdopterin guanine dinucleotide) is required as a cofactor. Predicted to be exported by the Tat system. The position of the signal peptide cleavage has not been experimentally proven.

The protein localises to the periplasm. It carries out the reaction 2 Fe(II)-[cytochrome] + nitrate + 2 H(+) = 2 Fe(III)-[cytochrome] + nitrite + H2O. Its function is as follows. Catalytic subunit of the periplasmic nitrate reductase complex NapAB. Receives electrons from NapB and catalyzes the reduction of nitrate to nitrite. This chain is Periplasmic nitrate reductase, found in Salmonella agona (strain SL483).